We begin with the raw amino-acid sequence, 189 residues long: MSRLWLTGYRSYELGVFGSQDPKLLVIKDTLKKLLIGKLENGMDWLITGGQLGVEQWAAEVGLALKPDYPELKIAMMTPFAEFGSNWNENNRGTYAQLASRVDFHQSVSEQPYHGPQQLRNYQEFMLTHTDEAVMVYDLEVEGKPKYDYEAITRFAEQHAYPLTLIDMDWLQESANEYQENSNNGSQFE.

It belongs to the UPF0398 family.

This chain is UPF0398 protein LVIS_0849, found in Levilactobacillus brevis (strain ATCC 367 / BCRC 12310 / CIP 105137 / JCM 1170 / LMG 11437 / NCIMB 947 / NCTC 947) (Lactobacillus brevis).